The chain runs to 90 residues: Chromosomal protein MC1c (90 aa).

In terms of biological role, protects DNA against thermal denaturation and modulates transcription. The protein is Chromosomal protein MC1c of Methanothrix soehngenii (Methanosaeta concilii).